The chain runs to 242 residues: 1-(5-phosphoribosyl)-5-[(5-phosphoribosylamino)methylideneamino] imidazole-4-carboxamide isomerase (242 aa).

Residue Asp8 is the Proton acceptor of the active site. The active-site Proton donor is Asp129.

This sequence belongs to the HisA/HisF family.

The protein localises to the cytoplasm. It carries out the reaction 1-(5-phospho-beta-D-ribosyl)-5-[(5-phospho-beta-D-ribosylamino)methylideneamino]imidazole-4-carboxamide = 5-[(5-phospho-1-deoxy-D-ribulos-1-ylimino)methylamino]-1-(5-phospho-beta-D-ribosyl)imidazole-4-carboxamide. It functions in the pathway amino-acid biosynthesis; L-histidine biosynthesis; L-histidine from 5-phospho-alpha-D-ribose 1-diphosphate: step 4/9. This is 1-(5-phosphoribosyl)-5-[(5-phosphoribosylamino)methylideneamino] imidazole-4-carboxamide isomerase from Dictyoglomus turgidum (strain DSM 6724 / Z-1310).